The chain runs to 216 residues: Sperm microtubule inner protein 8 (216 aa).

As to quaternary structure, microtubule inner protein component of sperm flagellar doublet microtubules. In terms of tissue distribution, expressed in testis.

Its subcellular location is the cytoplasm. It localises to the cytoskeleton. The protein resides in the flagellum axoneme. Functionally, microtubule inner protein (MIP) part of the dynein-decorated doublet microtubules (DMTs) in flagellum axoneme. May serve to reinforce and thus stabilize the microtubule structure in the sperm flagella. This Mus musculus (Mouse) protein is Sperm microtubule inner protein 8 (Spmip8).